Here is a 196-residue protein sequence, read N- to C-terminus: Probable nicotinate-nucleotide adenylyltransferase (196 aa).

The protein belongs to the NadD family.

The enzyme catalyses nicotinate beta-D-ribonucleotide + ATP + H(+) = deamido-NAD(+) + diphosphate. It functions in the pathway cofactor biosynthesis; NAD(+) biosynthesis; deamido-NAD(+) from nicotinate D-ribonucleotide: step 1/1. Catalyzes the reversible adenylation of nicotinate mononucleotide (NaMN) to nicotinic acid adenine dinucleotide (NaAD). This is Probable nicotinate-nucleotide adenylyltransferase from Caldicellulosiruptor saccharolyticus (strain ATCC 43494 / DSM 8903 / Tp8T 6331).